The primary structure comprises 463 residues: ATP-dependent protease ATPase subunit HslU (463 aa).

ATP-binding positions include Ile19, 61-66 (GVGKTE), Asp277, Glu341, and Arg413.

It belongs to the ClpX chaperone family. HslU subfamily. A double ring-shaped homohexamer of HslV is capped on each side by a ring-shaped HslU homohexamer. The assembly of the HslU/HslV complex is dependent on binding of ATP.

It is found in the cytoplasm. ATPase subunit of a proteasome-like degradation complex; this subunit has chaperone activity. The binding of ATP and its subsequent hydrolysis by HslU are essential for unfolding of protein substrates subsequently hydrolyzed by HslV. HslU recognizes the N-terminal part of its protein substrates and unfolds these before they are guided to HslV for hydrolysis. The protein is ATP-dependent protease ATPase subunit HslU of Bacillus cytotoxicus (strain DSM 22905 / CIP 110041 / 391-98 / NVH 391-98).